A 293-amino-acid chain; its full sequence is Probable metal transport system membrane protein CPn_0543/CP_0209/CPj0543/CpB0565 (293 aa).

The next 7 helical transmembrane spans lie at 12-32 (LLIL…GGVM), 41-61 (IVSI…LTLW), 68-88 (LSFF…LCIG), 101-121 (LIAM…SRLP), 140-160 (PSDL…VVLC), 183-203 (LWYF…IYVM), and 253-273 (FPVG…SLCV).

Belongs to the ABC-3 integral membrane protein family.

It is found in the cell inner membrane. Functionally, part of an ATP-driven transport system CPn_0541/CPn_0542/CPn_0543 for a metal. This chain is Probable metal transport system membrane protein CPn_0543/CP_0209/CPj0543/CpB0565, found in Chlamydia pneumoniae (Chlamydophila pneumoniae).